Reading from the N-terminus, the 119-residue chain is Large ribosomal subunit protein bL20 (119 aa).

Belongs to the bacterial ribosomal protein bL20 family.

Functionally, binds directly to 23S ribosomal RNA and is necessary for the in vitro assembly process of the 50S ribosomal subunit. It is not involved in the protein synthesizing functions of that subunit. In Streptococcus thermophilus (strain ATCC BAA-491 / LMD-9), this protein is Large ribosomal subunit protein bL20.